We begin with the raw amino-acid sequence, 396 residues long: Stearoyl-[acyl-carrier-protein] 9-desaturase, chloroplastic (396 aa).

Residues 1–33 (MALRITPVTLQSERYRSFSFPKKANLRSPKFAM) constitute a chloroplast transit peptide. At A34 the chain carries Blocked amino end (Ala); partial. Fe cation-binding residues include E138, E176, H179, E229, E262, and H265.

Belongs to the fatty acid desaturase type 2 family. In terms of assembly, homodimer. The cofactor is Fe(2+). Most of the N-terminus is blocked.

Its subcellular location is the plastid. The protein localises to the chloroplast. It catalyses the reaction octadecanoyl-[ACP] + 2 reduced [2Fe-2S]-[ferredoxin] + O2 + 2 H(+) = (9Z)-octadecenoyl-[ACP] + 2 oxidized [2Fe-2S]-[ferredoxin] + 2 H2O. It participates in lipid metabolism; fatty acid metabolism. In terms of biological role, converts stearoyl-ACP to oleoyl-ACP by introduction of a cis double bond between carbons 9 and 10 of the acyl chain. In Carthamus tinctorius (Safflower), this protein is Stearoyl-[acyl-carrier-protein] 9-desaturase, chloroplastic.